The following is a 729-amino-acid chain: Probable pre-mRNA-splicing factor ATP-dependent RNA helicase DEAH3 (729 aa).

The Helicase ATP-binding domain maps to 75 to 244 (LNTLNSNQTL…FSGAPLMKVP (170 aa)). Residue 88 to 95 (GETGSGKT) coordinates ATP. The DEAH box signature appears at 191-194 (DEAH). A Helicase C-terminal domain is found at 269-449 (TVVQIHMCEP…NTVLTLKKLG (181 aa)).

It belongs to the DEAD box helicase family. DEAH subfamily. PRP43 sub-subfamily.

The enzyme catalyses ATP + H2O = ADP + phosphate + H(+). May be involved in pre-mRNA splicing. The chain is Probable pre-mRNA-splicing factor ATP-dependent RNA helicase DEAH3 from Arabidopsis thaliana (Mouse-ear cress).